The sequence spans 542 residues: L-ornithine N(5)-monooxygenase (542 aa).

FAD is bound by residues E45–H53 and Q64. Position 69 (K69) interacts with substrate. Position 218–221 (S218–S221) interacts with NADP(+). Substrate is bound by residues N263–F266 and N294. Residue N294–S296 participates in NADP(+) binding. A disordered region spans residues F443 to P472. Over residues S447 to P472 the composition is skewed to low complexity. An FAD-binding site is contributed by T518–L520. S521 contributes to the substrate binding site.

Belongs to the lysine N(6)-hydroxylase/L-ornithine N(5)-oxygenase family. Homotetramer. The cofactor is FAD.

It catalyses the reaction L-ornithine + NADPH + O2 = N(5)-hydroxy-L-ornithine + NADP(+) + H2O. It carries out the reaction L-ornithine + NADH + O2 = N(5)-hydroxy-L-ornithine + NAD(+) + H2O. It functions in the pathway siderophore biosynthesis. Its function is as follows. L-ornithine N(5)-monooxygenase; part of the gene cluster that mediates the biosynthesis of coprinoferrin, an acylated tripeptide hydroxamate siderophore. The biosynthesis of coprinoferrin depends on the hydroxylation of ornithine to N(5)-hydroxyornithine, catalyzed by the monooxygenase cpf2. The second step, the acylation of N(5)-hydroxy-L-ornithine to yield N(5)-hexanoyl-N(5)-hydroxyl-L-ornithine is catalyzed by a not yet identified acyltransferase. Finally, assembly of coprinoferrin is catalyzed by the nonribosomal peptide synthase (NRPS) cpf1 via amide bond formation between three N(5)-hexanoyl-N(5)-hydroxyl-L-ornithine molecules to release the linear trimer. Interestingly, proteins seemingly not directly related to biosynthesis, such as transcription factors, replication factors, and autophagy-related proteins, are conserved among the clusters homologous to the coprinoferrin cluster, suggesting that the cluster may also play developmental and cell biological functions. This Coprinopsis cinerea (strain Okayama-7 / 130 / ATCC MYA-4618 / FGSC 9003) (Inky cap fungus) protein is L-ornithine N(5)-monooxygenase.